The following is a 397-amino-acid chain: MPIVSLPKIKHVRAFTVRGGGADYHDQGEGHWIDDHIATPMSRYPDYRQSRQSFGINVLGTLVVEIEAEDGTVGFAVTTGGEPAAYIVEKHLARFLEGRAPTDYEKIWDQMYFSTQYYGRKGLVVNAISGVDLALWDLLGKLRQEPVYHLLGGAVRDELQFYATGARPDKAKEFGFIGGKMPLHHGPAEGVEGLKKNIAELADMRSKVGDDFWLMWDCWMALDVDYATRLAIAAHDFGLKWIEEAISPDDYWGYQQLKRNVPKGMLVTTGEHEATRWGFRMLMEMDCCDIIQPDVGWCGGVTELLKISALADAHGKMVVPHGSSVYSYHFVITRHNSPFAEFLMMHPGPTEVVPMFHPQLLGEPVPDNGRMKVSALDKPGFGVDLNPDIAMHRPYTH.

2 residues coordinate substrate: histidine 25 and arginine 51. 3 residues coordinate Mg(2+): aspartate 217, glutamate 243, and glutamate 271. Histidine 321 (proton acceptor) is an active-site residue. Glutamate 341 lines the substrate pocket.

This sequence belongs to the mandelate racemase/muconate lactonizing enzyme family. RhamD subfamily. As to quaternary structure, homooctamer; tetramer of dimers. Mg(2+) serves as cofactor.

The enzyme catalyses L-rhamnonate = 2-dehydro-3-deoxy-L-rhamnonate + H2O. It functions in the pathway carbohydrate degradation; L-rhamnose degradation. Its function is as follows. Catalyzes the dehydration of L-rhamnonate to 2-keto-3-deoxy-L-rhamnonate (KDR). Also shows activity with L-lyxonate and L-mannonate, with much lower catalytic efficiency. Catalyzes the third step in an alternative pathway for rhamnose utilization that does not involve phosphorylated intermediates. This chain is L-rhamnonate dehydratase, found in Sphingomonas sp. (strain SKA58).